Here is a 619-residue protein sequence, read N- to C-terminus: Type VI secretion system component TssF1 (619 aa).

Interacts with TssA1.

Core component of the H1 type VI (H1-T6SS) secretion system that plays a role in the release of toxins targeting both eukaryotic and prokaryotic species. The polypeptide is Type VI secretion system component TssF1 (Pseudomonas aeruginosa (strain ATCC 15692 / DSM 22644 / CIP 104116 / JCM 14847 / LMG 12228 / 1C / PRS 101 / PAO1)).